Here is a 341-residue protein sequence, read N- to C-terminus: Adenosine deaminase (341 aa).

His-15 and His-17 together coordinate Zn(2+). Substrate contacts are provided by His-17, Asp-19, and Gly-172. His-199 lines the Zn(2+) pocket. Catalysis depends on Glu-202, which acts as the Proton donor. Asp-279 contacts Zn(2+).

The protein belongs to the metallo-dependent hydrolases superfamily. Adenosine and AMP deaminases family. Adenosine deaminase subfamily. Zn(2+) serves as cofactor.

The enzyme catalyses adenosine + H2O + H(+) = inosine + NH4(+). It carries out the reaction 2'-deoxyadenosine + H2O + H(+) = 2'-deoxyinosine + NH4(+). Functionally, catalyzes the hydrolytic deamination of adenosine and 2-deoxyadenosine. The chain is Adenosine deaminase from Streptococcus equi subsp. zooepidemicus (strain MGCS10565).